A 296-amino-acid polypeptide reads, in one-letter code: Protease HtpX homolog (296 aa).

The next 2 helical transmembrane spans lie at 14-34 (VFLL…VGYL) and 38-58 (SLVT…VIMI). Histidine 144 is a Zn(2+) binding site. The active site involves glutamate 145. Histidine 148 serves as a coordination point for Zn(2+). Helical transmembrane passes span 159–179 (IALA…NWWL) and 198–218 (LLVF…AAVI). Glutamate 227 is a Zn(2+) binding site.

Belongs to the peptidase M48B family. The cofactor is Zn(2+).

It localises to the cell membrane. The protein is Protease HtpX homolog of Leuconostoc citreum (strain KM20).